A 666-amino-acid polypeptide reads, in one-letter code: SNARE-interacting protein KEULE (666 aa).

Residues 340–377 adopt a coiled-coil conformation; the sequence is KNKAAQLQGKRDGAELSTRDLQKMVQALPQYSEQIDKL. The disordered stretch occupies residues 534 to 589; that stretch reads KEDFPCMNDPSPSFHGSTSLSSAASSSQGQAAQSMRSRRTPTWAKPRGSDDGYSSD. Over residues 550-568 the composition is skewed to low complexity; it reads STSLSSAASSSQGQAAQSM.

Belongs to the STXBP/unc-18/SEC1 family. In terms of assembly, binds the syntaxin KNOLLE. Interacts with SEC6. As to expression, expressed throughout the plant, both in mitotically active and quiescent cells. Enriched in dividing tissues.

The protein localises to the cytoplasm. Its subcellular location is the membrane. It is found in the cytoskeleton. The protein resides in the phragmoplast. In terms of biological role, regulator of vesicle trafficking involved in cytokinesis and root hair development, but not required for cell elongation. In Arabidopsis thaliana (Mouse-ear cress), this protein is SNARE-interacting protein KEULE (KEU).